Reading from the N-terminus, the 520-residue chain is NADH-quinone oxidoreductase subunit N (520 aa).

The next 14 helical transmembrane spans lie at 13–33 (ALLPEMLLSGGAMLLLLASVW), 55–75 (FGVILCLVVGLAVVIAWGDGA), 87–107 (GFRWAVDLVILLGTALALMLL), 115–135 (AAFGPEVPSLMLLASTGMMVL), 141–161 (LMFVFLGVELMSLAVYVLAGV), 176–196 (FLLGAISSGFLLYGMALLFGA), 219–239 (FMSGVALLLVGLAFKVAAAPF), 250–270 (APLPVTAFMSATVKTAAFAVF), 285–305 (WHMGLWWLAAVTMVVGNVFAL), 313–333 (MLAYSSIAHAGYLLVSIIVGD), 339–359 (ALIFYVVSYTLATMGAFGVLI), 383–403 (WLAIAMTVFLLAFMGMPVLGG), 425–445 (ILAVVLVIASAVSAAYYLAVV), and 468–488 (SLIATAAVALLVFGLYPTPIM). The segment covering 494-508 (ATTTTSPTSNPAAPR) has biased composition (low complexity). The tract at residues 494–520 (ATTTTSPTSNPAAPRGEVRLQTASVPR) is disordered.

The protein belongs to the complex I subunit 2 family. In terms of assembly, NDH-1 is composed of 14 different subunits. Subunits NuoA, H, J, K, L, M, N constitute the membrane sector of the complex.

It localises to the cell inner membrane. It catalyses the reaction a quinone + NADH + 5 H(+)(in) = a quinol + NAD(+) + 4 H(+)(out). Its function is as follows. NDH-1 shuttles electrons from NADH, via FMN and iron-sulfur (Fe-S) centers, to quinones in the respiratory chain. The immediate electron acceptor for the enzyme in this species is believed to be ubiquinone. Couples the redox reaction to proton translocation (for every two electrons transferred, four hydrogen ions are translocated across the cytoplasmic membrane), and thus conserves the redox energy in a proton gradient. This Gemmatimonas aurantiaca (strain DSM 14586 / JCM 11422 / NBRC 100505 / T-27) protein is NADH-quinone oxidoreductase subunit N.